A 1860-amino-acid chain; its full sequence is Proprotein convertase subtilisin/kexin type 5 (1860 aa).

The signal sequence occupies residues 1–32; sequence MGWGSRCCCPGRLDLLCVLALLGGCLLPVCRT. A propeptide spanning residues 33–114 is cleaved from the precursor; it reads RVYTNHWAVK…QQVVKKRTKR (82 aa). Residues 115 to 1743 lie on the Extracellular side of the membrane; it reads DYDFSRAQST…VRPATEHFKT (1629 aa). Residues 134–453 form the Peptidase S8 domain; that stretch reads MWYMHCSDNT…FGLMDAEAMV (320 aa). Active-site charge relay system residues include Asp171 and His212. Asn225 and Asn381 each carry an N-linked (GlcNAc...) asparagine glycan. Ser386 functions as the Charge relay system in the catalytic mechanism. The P/Homo B domain occupies 461-601; the sequence is TVPRQHVCVE…SLVLYGTSVQ (141 aa). The Cell attachment site signature appears at 519–521; it reads RGD. FU repeat units follow at residues 630 to 680, 683 to 730, 734 to 777, 779 to 824, 832 to 879, 882 to 927, 929 to 979, 982 to 1028, 1032 to 1077, 1079 to 1121, 1125 to 1168, 1177 to 1221, 1225 to 1272, 1274 to 1318, 1320 to 1363, 1365 to 1411, 1415 to 1461, 1465 to 1510, 1514 to 1559, 1563 to 1610, 1614 to 1659, and 1665 to 1712; these read EDYA…GHYH, KKRC…GSYQ, KNLC…GRYF, GQDC…SYYF, YKSC…GEYV, HGHC…WKFE, ENQC…GHYA, GNTC…GEVQ, YEEC…KTYS, EVEC…GFYG, MGEC…KTQE, LRKL…GTWP, SGSC…GSYA, DGIC…RHVA, KGVC…GFYA, SRHC…GTYY, TKEC…SEYW, APGC…GYYA, SNRC…GYYA, TGRC…HYYV, TQTC…GEYR, and KFNC…SDPP. The interval 636-1727 is CRM (Cys-rich motif); it reads CDPECSEVGC…CDCQDTTDEC (1092 aa). Asn665 carries an N-linked (GlcNAc...) asparagine glycan. N-linked (GlcNAc...) asparagine glycosylation is found at Asn752, Asn802, and Asn852. A PLAC domain is found at 869–913; sequence MGAICKDGEYVDEHGHCQTCEASCAKCQGPTQEDCTTCPMTRIFD. An N-linked (GlcNAc...) asparagine glycan is attached at Asn1014. Asn1191 carries N-linked (GlcNAc...) asparagine glycosylation. Asn1290 carries an N-linked (GlcNAc...) asparagine glycan. Asn1497 carries N-linked (GlcNAc...) asparagine glycosylation. N-linked (GlcNAc...) asparagine glycosylation is found at Asn1685 and Asn1707. Residues 1744–1764 form a helical membrane-spanning segment; that stretch reads ALFITSSMMLVLLLGAAVVVW. At 1765 to 1860 the chain is on the cytoplasmic side; the sequence is KKSRGRVQPA…YDDESYSYYQ (96 aa). 2 AC regions span residues 1807-1826 and 1838-1860; these read VIEY…IVYM and YGLL…SYYQ.

This sequence belongs to the peptidase S8 family. As to expression, expressed in T-lymphocytes.

It localises to the secreted. Its subcellular location is the endomembrane system. Its function is as follows. Serine endoprotease that processes various proproteins by cleavage at paired basic amino acids, recognizing the RXXX[KR]R consensus motif. Likely functions in the constitutive and regulated secretory pathways. Plays an essential role in pregnancy establishment by proteolytic activation of a number of important factors such as BMP2, CALD1 and alpha-integrins. In Homo sapiens (Human), this protein is Proprotein convertase subtilisin/kexin type 5 (PCSK5).